The sequence spans 251 residues: Putative glutathione-independent glyoxalase hsp3105 (251 aa).

The protein belongs to the peptidase C56 family. HSP31-like subfamily.

The protein localises to the cytoplasm. Its subcellular location is the nucleus. It carries out the reaction methylglyoxal + H2O = (R)-lactate + H(+). May catalyze the conversion of methylglyoxal (MG) to D-lactate in a single glutathione (GSH)-independent step. May play a role in detoxifying endogenously produced glyoxals. Involved in protection against reactive oxygen species (ROS). The sequence is that of Putative glutathione-independent glyoxalase hsp3105 from Schizosaccharomyces pombe (strain 972 / ATCC 24843) (Fission yeast).